The chain runs to 739 residues: NAD(P)H-quinone oxidoreductase subunit 5, chloroplastic (739 aa).

Transmembrane regions (helical) follow at residues 9–29, 39–59, 89–109, 125–145, 147–167, 185–205, 224–244, 258–278, 280–300, 327–347, 354–374, 396–416, 425–445, 544–564, 603–623, and 716–736; these read WIIPFLPFPVTISIGLGLLLV, IWAFFSVLLLSIAMVFSADLA, IDPLTSIMLILITTVGIMVLI, FAYMSFFNTSMLGLVTSSNLI, IYIFWELVGMCSYLLIGFWFT, GDFGLLLGILGLYWITGSFEF, LFAALCASLLFVGAVAKSAQF, TPISALIHAATMVAAGIFLVA, LLPLFTVIPYIMNFISLIGII, LGYIMLAPGIGSYRAALFHLI, ALLFLGSGSIIHSMEPIVGYS, TTFFLGTLSLCGMPPLACFWS, WLYSPIFAIIAWSTAGLTAFY, LFPMLVLVLFTLFIGFIGIPF, IYSVTISFLGIFLAYIFYGSV, and ISSYIFLYAFSVSICLIIYYF.

It belongs to the complex I subunit 5 family. As to quaternary structure, NDH is composed of at least 16 different subunits, 5 of which are encoded in the nucleus.

It localises to the plastid. Its subcellular location is the chloroplast thylakoid membrane. The catalysed reaction is a plastoquinone + NADH + (n+1) H(+)(in) = a plastoquinol + NAD(+) + n H(+)(out). The enzyme catalyses a plastoquinone + NADPH + (n+1) H(+)(in) = a plastoquinol + NADP(+) + n H(+)(out). Its function is as follows. NDH shuttles electrons from NAD(P)H:plastoquinone, via FMN and iron-sulfur (Fe-S) centers, to quinones in the photosynthetic chain and possibly in a chloroplast respiratory chain. The immediate electron acceptor for the enzyme in this species is believed to be plastoquinone. Couples the redox reaction to proton translocation, and thus conserves the redox energy in a proton gradient. This chain is NAD(P)H-quinone oxidoreductase subunit 5, chloroplastic (ndhF), found in Acorus calamus (Sweet flag).